The sequence spans 164 residues: FMN reductase (NADH) RutF (164 aa).

It belongs to the non-flavoprotein flavin reductase family. RutF subfamily.

It catalyses the reaction FMNH2 + NAD(+) = FMN + NADH + 2 H(+). Catalyzes the reduction of FMN to FMNH2 which is used to reduce pyrimidine by RutA via the Rut pathway. The polypeptide is FMN reductase (NADH) RutF (Klebsiella pneumoniae (strain 342)).